The following is a 139-amino-acid chain: Natriuretic peptides A (139 aa).

The N-terminal stretch at 1–21 is a signal peptide; sequence MTALVLWGLLLLLGQHTQVNS. Positions 22-114 are excised as a propeptide; the sequence is HVLGRPFSAS…QDLLMSLRKR (93 aa). Cysteines 118 and 134 form a disulfide.

Belongs to the natriuretic peptide family.

The protein localises to the secreted. Hormone playing a key role in cardiovascular homeostasis through regulation of natriuresis, diuresis, and vasodilation. Has a cGMP-stimulating activity. The chain is Natriuretic peptides A (nppa) from Takifugu rubripes (Japanese pufferfish).